The chain runs to 204 residues: Carbon disulfide hydrolase (204 aa).

Cysteine 35, histidine 88, and cysteine 91 together coordinate Zn(2+).

The protein belongs to the beta-class carbonic anhydrase family. In terms of assembly, forms a hexadecameric catenane homooligomer, through interactions of two interlocked octameric rings. Exists as both octamers and hexadecamers in solution. It depends on Zn(2+) as a cofactor.

The catalysed reaction is carbon disulfide + 2 H2O = 2 hydrogen sulfide + CO2 + 2 H(+). It functions in the pathway sulfur metabolism; hydrogen sulfide biosynthesis. Catalyzes the conversion of carbon disulfide into hydrogen sulfide and carbon dioxide, with carbonyl sulfide as an intermediate. Likely plays a key role in sulfur metabolism that allows Acidianus sp. A1-3 to grow on carbon disulfide as the main carbon and energy source. Does not show carbonic anhydrase activity (hydration of CO(2) to carbonate). The polypeptide is Carbon disulfide hydrolase (Acidianus sp. (strain A1-3)).